The primary structure comprises 70 residues: Venom antimicrobial peptide-6 (70 aa).

Residues methionine 1 to alanine 23 form the signal peptide. Residue phenylalanine 36 is modified to Phenylalanine amide. Residues serine 40 to tyrosine 70 constitute a propeptide that is removed on maturation.

Belongs to the non-disulfide-bridged peptide (NDBP) superfamily. Short antimicrobial peptide (group 4) family. As to expression, expressed by the venom gland.

It localises to the secreted. The protein localises to the target cell membrane. Its function is as follows. Amphipathic peptide that exhibits extensive cytolytic activities against both prokaryotic and eukaryotic cells. Is more potent against Gram-positive bacteria (lethal concentration (LC)=0.25-2.9 uM) than against Gram-negative bacteria (LC=6.2-&gt;50 uM), and fungi ((LC)=14.1-&gt;50 uM). Shows hemolytic activity against rabbit erythrocytes (37.7% of inhibition at 6.25 uM) and cytolysis against rat dorsal root ganglions. In vivo, intravenous injection into mice tail provokes uncomfortable symptoms with a death rate of 12.5%. The protein is Venom antimicrobial peptide-6 of Mesobuthus eupeus (Lesser Asian scorpion).